Reading from the N-terminus, the 275-residue chain is Diaminopimelate epimerase (275 aa).

Residues asparagine 13, glutamine 46, and asparagine 65 each contribute to the substrate site. The active-site Proton donor is the cysteine 74. Substrate is bound by residues 75-76 (GN), asparagine 158, asparagine 191, and 209-210 (ER). The Proton acceptor role is filled by cysteine 218. 219 to 220 (GT) is a binding site for substrate.

It belongs to the diaminopimelate epimerase family. As to quaternary structure, homodimer.

The protein resides in the cytoplasm. The enzyme catalyses (2S,6S)-2,6-diaminopimelate = meso-2,6-diaminopimelate. The protein operates within amino-acid biosynthesis; L-lysine biosynthesis via DAP pathway; DL-2,6-diaminopimelate from LL-2,6-diaminopimelate: step 1/1. Functionally, catalyzes the stereoinversion of LL-2,6-diaminopimelate (L,L-DAP) to meso-diaminopimelate (meso-DAP), a precursor of L-lysine and an essential component of the bacterial peptidoglycan. The protein is Diaminopimelate epimerase of Nitrosomonas europaea (strain ATCC 19718 / CIP 103999 / KCTC 2705 / NBRC 14298).